Here is a 424-residue protein sequence, read N- to C-terminus: ATP-sensitive inward rectifier potassium channel 8 (424 aa).

Over 1–69 (MLARKSIIPE…IFTTLVDLKW (69 aa)) the chain is Cytoplasmic. Ser6 bears the Phosphoserine mark. The helical transmembrane segment at 70–94 (RHTLVIFTMSFLCSWLLFAIMWWLV) threads the bilayer. The Extracellular segment spans residues 95–126 (AFAHGDIYAYMEKGITEKSGLESAVCVTNVRS). Residues 127 to 138 (FTSAFLFSIEVQ) constitute an intramembrane region (helical; Pore-forming). Positions 139–145 (VTIGFGG) form an intramembrane region, pore-forming. The Selectivity filter signature appears at 140–145 (TIGFGG). The Extracellular segment spans residues 146–154 (RMMTEECPL). Residues 155 to 176 (AITVLILQNIVGLIINAVMLGC) traverse the membrane as a helical segment. The Cytoplasmic segment spans residues 177–424 (IFMKTAQAHR…PEGNQCPSES (248 aa)). The tract at residues 374–424 (LSHQNSLRKRNSMRRNNSMRRSNSIRRNNSSLMVPKVQFMTPEGNQCPSES) is disordered. Low complexity predominate over residues 387–404 (RRNNSMRRSNSIRRNNSS).

This sequence belongs to the inward rectifier-type potassium channel (TC 1.A.2.1) family. KCNJ8 subfamily. In terms of assembly, interacts with ABCC9. As to expression, widely expressed, including in pancreatic islets, pituitary, skeletal muscle and heart.

It is found in the membrane. The enzyme catalyses K(+)(in) = K(+)(out). Its function is as follows. Inward rectifier potassium channels are characterized by a greater tendency to allow potassium to flow into the cell rather than out of it. Their voltage dependence is regulated by the concentration of extracellular potassium; as external potassium is raised, the voltage range of the channel opening shifts to more positive voltages. The inward rectification is mainly due to the blockage of outward current by internal magnesium. This channel is activated by internal ATP and can be blocked by external barium. Can form a sulfonyllurea-sensitive but ATP-insensitive potassium channel with ABCC9. The chain is ATP-sensitive inward rectifier potassium channel 8 (Kcnj8) from Rattus norvegicus (Rat).